A 218-amino-acid chain; its full sequence is GTP cyclohydrolase 1 (218 aa).

Residues cysteine 109, histidine 112, and cysteine 180 each contribute to the Zn(2+) site.

The protein belongs to the GTP cyclohydrolase I family. As to quaternary structure, toroid-shaped homodecamer, composed of two pentamers of five dimers.

The catalysed reaction is GTP + H2O = 7,8-dihydroneopterin 3'-triphosphate + formate + H(+). It participates in cofactor biosynthesis; 7,8-dihydroneopterin triphosphate biosynthesis; 7,8-dihydroneopterin triphosphate from GTP: step 1/1. The protein is GTP cyclohydrolase 1 of Mannheimia succiniciproducens (strain KCTC 0769BP / MBEL55E).